Reading from the N-terminus, the 179-residue chain is ATP synthase subunit delta (179 aa).

It belongs to the ATPase delta chain family. As to quaternary structure, F-type ATPases have 2 components, F(1) - the catalytic core - and F(0) - the membrane proton channel. F(1) has five subunits: alpha(3), beta(3), gamma(1), delta(1), epsilon(1). F(0) has three main subunits: a(1), b(2) and c(10-14). The alpha and beta chains form an alternating ring which encloses part of the gamma chain. F(1) is attached to F(0) by a central stalk formed by the gamma and epsilon chains, while a peripheral stalk is formed by the delta and b chains.

The protein resides in the cell inner membrane. Functionally, f(1)F(0) ATP synthase produces ATP from ADP in the presence of a proton or sodium gradient. F-type ATPases consist of two structural domains, F(1) containing the extramembraneous catalytic core and F(0) containing the membrane proton channel, linked together by a central stalk and a peripheral stalk. During catalysis, ATP synthesis in the catalytic domain of F(1) is coupled via a rotary mechanism of the central stalk subunits to proton translocation. In terms of biological role, this protein is part of the stalk that links CF(0) to CF(1). It either transmits conformational changes from CF(0) to CF(1) or is implicated in proton conduction. The sequence is that of ATP synthase subunit delta from Chlorobium chlorochromatii (strain CaD3).